We begin with the raw amino-acid sequence, 577 residues long: 2-succinyl-5-enolpyruvyl-6-hydroxy-3-cyclohexene-1-carboxylate synthase (577 aa).

This sequence belongs to the TPP enzyme family. MenD subfamily. In terms of assembly, homodimer. The cofactor is Mg(2+). Mn(2+) serves as cofactor. Thiamine diphosphate is required as a cofactor.

The catalysed reaction is isochorismate + 2-oxoglutarate + H(+) = 5-enolpyruvoyl-6-hydroxy-2-succinyl-cyclohex-3-ene-1-carboxylate + CO2. It functions in the pathway quinol/quinone metabolism; 1,4-dihydroxy-2-naphthoate biosynthesis; 1,4-dihydroxy-2-naphthoate from chorismate: step 2/7. Its pathway is quinol/quinone metabolism; menaquinone biosynthesis. In terms of biological role, catalyzes the thiamine diphosphate-dependent decarboxylation of 2-oxoglutarate and the subsequent addition of the resulting succinic semialdehyde-thiamine pyrophosphate anion to isochorismate to yield 2-succinyl-5-enolpyruvyl-6-hydroxy-3-cyclohexene-1-carboxylate (SEPHCHC). The sequence is that of 2-succinyl-5-enolpyruvyl-6-hydroxy-3-cyclohexene-1-carboxylate synthase from Enterococcus faecalis (strain ATCC 700802 / V583).